A 264-amino-acid chain; its full sequence is MEISHVIVLALVQGISEFLPISSSAHLILVPKLLGWPDQGLAFDVAVHVGTLSAILFYFKDTIFKLLRDFFASIAQRKMVGDSLLVWCVGFATIPVGIFGLLFNNVIEEYARSGVVIAVTTIIFGIALYFADLRSTNKSEYEMTIKFALIIGLAQAVALIPGVSRSGITMTAALFLGFSHKGSANFSFLLSIPVIILAGGLESIKLIKDPNALPWSDIALGVIISAVSAYICVKLFMGIISRIRMLPFVIYRLILGAFLLYLFL.

The next 8 membrane-spanning stretches (helical) occupy residues 1-21 (MEISHVIVLALVQGISEFLPI), 39-59 (QGLAFDVAVHVGTLSAILFYF), 83-103 (SLLVWCVGFATIPVGIFGLLF), 113-133 (SGVVIAVTTIIFGIALYFADL), 143-163 (MTIKFALIIGLAQAVALIPGV), 184-204 (ANFSFLLSIPVIILAGGLESI), 220-240 (LGVIISAVSAYICVKLFMGII), and 243-263 (IRMLPFVIYRLILGAFLLYLF).

Belongs to the UppP family.

Its subcellular location is the cell inner membrane. The catalysed reaction is di-trans,octa-cis-undecaprenyl diphosphate + H2O = di-trans,octa-cis-undecaprenyl phosphate + phosphate + H(+). In terms of biological role, catalyzes the dephosphorylation of undecaprenyl diphosphate (UPP). Confers resistance to bacitracin. This chain is Undecaprenyl-diphosphatase, found in Campylobacter concisus (strain 13826).